A 580-amino-acid polypeptide reads, in one-letter code: Methyl-CpG-binding domain protein 4 (580 aa).

The interval 1–36 (MGTTGLESLSLGDRGAAPTVTSSERLVPDPPNDLRK) is disordered. The region spanning 76 to 148 (ATAGTECRKS…EDFDFTVLSK (73 aa)) is the MBD domain. Phosphoserine is present on residues serine 318 and serine 428. The active site involves aspartate 560.

In terms of assembly, interacts with MLH1.

The protein resides in the nucleus. Mismatch-specific DNA N-glycosylase involved in DNA repair. Has thymine glycosylase activity and is specific for G:T mismatches within methylated and unmethylated CpG sites. Can also remove uracil or 5-fluorouracil in G:U mismatches. Has no lyase activity. Was first identified as methyl-CpG-binding protein. This chain is Methyl-CpG-binding domain protein 4, found in Homo sapiens (Human).